A 159-amino-acid chain; its full sequence is Ribosomal RNA large subunit methyltransferase H (159 aa).

S-adenosyl-L-methionine-binding positions include Leu76, Gly108, and 127–132 (FSKMTF).

The protein belongs to the RNA methyltransferase RlmH family. In terms of assembly, homodimer.

The protein localises to the cytoplasm. It carries out the reaction pseudouridine(1915) in 23S rRNA + S-adenosyl-L-methionine = N(3)-methylpseudouridine(1915) in 23S rRNA + S-adenosyl-L-homocysteine + H(+). Functionally, specifically methylates the pseudouridine at position 1915 (m3Psi1915) in 23S rRNA. This Clostridium tetani (strain Massachusetts / E88) protein is Ribosomal RNA large subunit methyltransferase H.